The sequence spans 336 residues: Glycerol-3-phosphate dehydrogenase [NAD(P)+] (336 aa).

NADPH contacts are provided by Ser11, Trp12, and Lys106. Lys106, Gly134, and Ser136 together coordinate sn-glycerol 3-phosphate. Residue Ala138 participates in NADPH binding. 5 residues coordinate sn-glycerol 3-phosphate: Lys189, Asp242, Ser252, Arg253, and Asn254. Lys189 functions as the Proton acceptor in the catalytic mechanism. An NADPH-binding site is contributed by Arg253. The NADPH site is built by Val277 and Glu279.

This sequence belongs to the NAD-dependent glycerol-3-phosphate dehydrogenase family.

The protein resides in the cytoplasm. The catalysed reaction is sn-glycerol 3-phosphate + NAD(+) = dihydroxyacetone phosphate + NADH + H(+). The enzyme catalyses sn-glycerol 3-phosphate + NADP(+) = dihydroxyacetone phosphate + NADPH + H(+). Its pathway is membrane lipid metabolism; glycerophospholipid metabolism. In terms of biological role, catalyzes the reduction of the glycolytic intermediate dihydroxyacetone phosphate (DHAP) to sn-glycerol 3-phosphate (G3P), the key precursor for phospholipid synthesis. The protein is Glycerol-3-phosphate dehydrogenase [NAD(P)+] of Agathobacter rectalis (strain ATCC 33656 / DSM 3377 / JCM 17463 / KCTC 5835 / VPI 0990) (Eubacterium rectale).